Reading from the N-terminus, the 248-residue chain is Ureidoacrylate amidohydrolase RutB (248 aa).

The Proton acceptor role is filled by Asp41. The active site involves Lys150. Cys183 acts as the Nucleophile in catalysis.

Belongs to the isochorismatase family. RutB subfamily.

The catalysed reaction is (Z)-3-ureidoacrylate + H2O + H(+) = (Z)-3-aminoacrylate + NH4(+) + CO2. It catalyses the reaction (Z)-3-ureidoacrylate + H2O = (Z)-3-aminoacrylate + carbamate + H(+). The enzyme catalyses (Z)-2-methylureidoacrylate + H2O + H(+) = (Z)-2-methylaminoacrylate + NH4(+) + CO2. Hydrolyzes ureidoacrylate to form aminoacrylate and carbamate. The carbamate hydrolyzes spontaneously, thereby releasing one of the nitrogen atoms of the pyrimidine ring as ammonia and one of its carbon atoms as CO2. The sequence is that of Ureidoacrylate amidohydrolase RutB from Methylorubrum extorquens (strain DSM 6343 / CIP 106787 / DM4) (Methylobacterium extorquens).